The chain runs to 534 residues: MLCYLLIHILCLQAVLGVPYDVLPLRIPALVPKDTSLLSGRGAFQQLIDHTNLDVGTFSQSYWFNTTYWGGPGSPIIFYTPGQHAATDRLHYLTDTTLPGLVAKEVRGAVVLVEHRYFGESQPFSNLSTANLQYLTLDQVLADFVHFARTVDLPFDLSGQSHPSRAPWIWIGNSYSAALVAWTEKLIPNVFWAYYASGAMVNCMQDFWQFNYPTQQGMPQDCRYSLEAIISHVDSVFLSGSPEQKHRLKTRFGLQDLDRLDDTASALSRPVIAWTLIQPSDTHAQFFEMCDAIGNLNSSWSRGHKVGSEINLQKALGNYANWFTTSYLPGLCESSGYSDWAGRNNVQCLDTANPSWQAFHDLAVQNEDRVWDWMICNFFLLWQTGAPVSRPTIFSRLVDSMYYKRRCKLIFPEEENVTYAARVTDDSINTLTGGWNHTGKRILFTNGEFDPWRSASVSSVFRPDGPMQSTSQQPIILIKGVQHQADMYVRNRINKDVREAMDTGIAQISRWVLDFHVEKSKTLTQYTSQVYCAH.

The signal sequence occupies residues 1–17 (MLCYLLIHILCLQAVLG). N-linked (GlcNAc...) asparagine glycans are attached at residues N65 and N126. Catalysis depends on S174, which acts as the Charge relay system. 3 N-linked (GlcNAc...) asparagine glycosylation sites follow: N297, N416, and N436. Residue D450 is the Charge relay system of the active site.

Belongs to the peptidase S28 family.

It participates in mycotoxin biosynthesis. Its function is as follows. Serine protease, part of the gene cluster that mediates the biosynthesis of the secondary metabolite victorin, the molecular basis for Victoria blight of oats. Within the pathway, vicPa and vicPb are probably involved in the processing of the vicA1 and vicA2 precursors. The pathway starts with the processing of the precursor vicA1 by several endopeptidases including kexin proteases as well as the cluster-specific S28 family peptidases vicPa and vicPb to produce 7 identical copies of the hexapeptide Gly-Leu-Lys-Leu-Ala-Phe. After being excised from the precursor peptide, the core peptides are cyclized and modified post-translationally by enzymes encoded within the gene cluster. The ustYa family oxidase vicYb is required for the formation of the macrocycle in victorin and the copper amine oxidases (CAOs) vicK1 and vicK2 are responsible for converting victorin to the active form by oxidizing the N-terminal glycyl residue in the peptides to glyoxylate. Relaxed substrate specificity of enzymes in the victorin biosynthetic pathway results in a metabolic grid that produces a set of analogs including victorinines B, C, E or HV-toxin M. The polypeptide is Serine protease vicPa (Bipolaris victoriae (strain FI3) (Victoria blight of oats agent)).